The following is a 551-amino-acid chain: Calcium-dependent protein kinase 3 (551 aa).

Residues 1–57 are disordered; sequence MGNCCRSPAAAAREDVKSSHFPASAGKKKPHQARNGGVGGGGGGGGGGGGGGGAGQK. Gly-2 carries N-myristoyl glycine lipidation. The segment covering 36–55 has biased composition (gly residues); sequence GGVGGGGGGGGGGGGGGGAG. The region spanning 77 to 335 is the Protein kinase domain; that stretch reads YALDRELGRG…AKQVLEHPWL (259 aa). ATP contacts are provided by residues 83–91 and Lys-106; that span reads LGRGEFGVT. Asp-201 functions as the Proton acceptor in the catalytic mechanism. The segment at 341–371 is autoinhibitory domain; that stretch reads APNVPLGDIVKSRLKQFSRMNRFKRRALRVI. EF-hand domains follow at residues 378–413, 414–449, 450–485, and 486–521; these read EEVE…FGSH, LAES…LQRM, ANDE…DGAG, and DSME…GTDW. Asp-391, Asp-393, Asp-395, Glu-402, Asp-427, Asn-429, Glu-438, Asp-463, Asp-465, Asn-467, Tyr-469, Glu-474, Asp-499, Asp-501, Asp-503, Lys-505, and Glu-510 together coordinate Ca(2+).

It belongs to the protein kinase superfamily. Ser/Thr protein kinase family. CDPK subfamily. As to expression, expressed in roots and developing seeds.

Its subcellular location is the membrane. The catalysed reaction is L-seryl-[protein] + ATP = O-phospho-L-seryl-[protein] + ADP + H(+). It carries out the reaction L-threonyl-[protein] + ATP = O-phospho-L-threonyl-[protein] + ADP + H(+). Activated by calcium. Autophosphorylation may play an important role in the regulation of the kinase activity. Its function is as follows. May play a role in signal transduction pathways that involve calcium as a second messenger. In Oryza sativa subsp. japonica (Rice), this protein is Calcium-dependent protein kinase 3.